Here is a 493-residue protein sequence, read N- to C-terminus: Glutamate--tRNA ligase (493 aa).

A 'HIGH' region motif is present at residues 10–20 (PSPTGTPHVGL). Residues 254–258 (KLSKR) carry the 'KMSKS' region motif. K257 contacts ATP.

This sequence belongs to the class-I aminoacyl-tRNA synthetase family. Glutamate--tRNA ligase type 1 subfamily. Monomer.

Its subcellular location is the cytoplasm. It catalyses the reaction tRNA(Glu) + L-glutamate + ATP = L-glutamyl-tRNA(Glu) + AMP + diphosphate. Catalyzes the attachment of glutamate to tRNA(Glu) in a two-step reaction: glutamate is first activated by ATP to form Glu-AMP and then transferred to the acceptor end of tRNA(Glu). The protein is Glutamate--tRNA ligase of Corynebacterium efficiens (strain DSM 44549 / YS-314 / AJ 12310 / JCM 11189 / NBRC 100395).